A 575-amino-acid chain; its full sequence is Transcription factor ncaA (575 aa).

Composition is skewed to polar residues over residues 1-15 (MAET…TPEN) and 22-34 (DNQS…SKNP). Disordered stretches follow at residues 1–40 (MAET…VKDR) and 79–114 (IRSG…AGGE). A UBZ4-type; degenerate zinc finger spans residues 39 to 66 (DRKCQYCHQAFTSSSLGRHLDQYLFKKK). The span at 93 to 102 (GKRDTPERAM) shows a compositional bias: basic and acidic residues. Residues 337 to 371 (FAREVEKRKTLDEQLARVQQEANQLRAQVEKLGSC) are a coiled coil. Residues 429-575 (GRVGVGYGNP…ASGPPPSSGA (147 aa)) are disordered. Residues 440 to 454 (LDDRSSADTKARATE) are compositionally biased toward basic and acidic residues. A compositionally biased stretch (low complexity) spans 455–471 (EPPASAALASTSTSAPP). Positions 472 to 485 (SAHPPPRALQPAPG) are enriched in pro residues. 2 stretches are compositionally biased toward polar residues: residues 493-513 (DQSS…TSPY) and 538-558 (SAAN…HQSL).

In terms of assembly, interacts with atrR.

The protein resides in the nucleus. Functionally, transcription factor required for normal voriconazole resistance. Contributes to the function of atrR and regulates the expression of the atrR target gene abcG1. The sequence is that of Transcription factor ncaA from Aspergillus fumigatus (strain ATCC MYA-4609 / CBS 101355 / FGSC A1100 / Af293) (Neosartorya fumigata).